A 437-amino-acid polypeptide reads, in one-letter code: Glutamate-1-semialdehyde 2,1-aminomutase (437 aa).

K274 is modified (N6-(pyridoxal phosphate)lysine).

It belongs to the class-III pyridoxal-phosphate-dependent aminotransferase family. HemL subfamily. Homodimer. Requires pyridoxal 5'-phosphate as cofactor.

Its subcellular location is the cytoplasm. It catalyses the reaction (S)-4-amino-5-oxopentanoate = 5-aminolevulinate. Its pathway is porphyrin-containing compound metabolism; protoporphyrin-IX biosynthesis; 5-aminolevulinate from L-glutamyl-tRNA(Glu): step 2/2. This is Glutamate-1-semialdehyde 2,1-aminomutase from Leptothrix cholodnii (strain ATCC 51168 / LMG 8142 / SP-6) (Leptothrix discophora (strain SP-6)).